Consider the following 310-residue polypeptide: Beta-ketoacyl-[acyl-carrier-protein] synthase III 1 (310 aa).

Catalysis depends on residues cysteine 112 and histidine 235. An ACP-binding region spans residues 236 to 240 (QANIR). Asparagine 265 is an active-site residue.

The protein belongs to the thiolase-like superfamily. FabH family. Homodimer.

It is found in the cytoplasm. It carries out the reaction malonyl-[ACP] + acetyl-CoA + H(+) = 3-oxobutanoyl-[ACP] + CO2 + CoA. Its pathway is lipid metabolism; fatty acid biosynthesis. In terms of biological role, catalyzes the condensation reaction of fatty acid synthesis by the addition to an acyl acceptor of two carbons from malonyl-ACP. Catalyzes the first condensation reaction which initiates fatty acid synthesis and may therefore play a role in governing the total rate of fatty acid production. Possesses both acetoacetyl-ACP synthase and acetyl transacylase activities. Its substrate specificity determines the biosynthesis of branched-chain and/or straight-chain of fatty acids. The sequence is that of Beta-ketoacyl-[acyl-carrier-protein] synthase III 1 from Bacillus cereus (strain ATCC 14579 / DSM 31 / CCUG 7414 / JCM 2152 / NBRC 15305 / NCIMB 9373 / NCTC 2599 / NRRL B-3711).